The following is a 461-amino-acid chain: Argininosuccinate lyase (461 aa).

It belongs to the lyase 1 family. Argininosuccinate lyase subfamily.

The protein resides in the cytoplasm. It catalyses the reaction 2-(N(omega)-L-arginino)succinate = fumarate + L-arginine. It participates in amino-acid biosynthesis; L-arginine biosynthesis; L-arginine from L-ornithine and carbamoyl phosphate: step 3/3. In Aeromonas hydrophila subsp. hydrophila (strain ATCC 7966 / DSM 30187 / BCRC 13018 / CCUG 14551 / JCM 1027 / KCTC 2358 / NCIMB 9240 / NCTC 8049), this protein is Argininosuccinate lyase.